The chain runs to 262 residues: Troponin T, slow skeletal muscle (262 aa).

The span at 1–31 shows a compositional bias: acidic residues; it reads MSDAEEQEYEEEQPEEEEAAEEEEAPEEPEP. 3 disordered regions span residues 1-59, 107-153, and 165-197; these read MSDA…PEGE, RAER…KKKV, and LVKA…NIDH. Ser-2 is modified (phosphoserine; by CK2). Positions 32 to 41 are enriched in basic and acidic residues; that stretch reads VAEREEERPK. The span at 43-55 shows a compositional bias: pro residues; it reads SRPVVPPLIPPKI. 2 stretches are compositionally biased toward basic and acidic residues: residues 107-149 and 177-197; these read RAER…DDAK and TGRE…NIDH.

It belongs to the troponin T family. In terms of assembly, interacts with TPM3.

Troponin T is the tropomyosin-binding subunit of troponin, the thin filament regulatory complex which confers calcium-sensitivity to striated muscle actomyosin ATPase activity. This chain is Troponin T, slow skeletal muscle (TNNT1), found in Sus scrofa (Pig).